A 147-amino-acid polypeptide reads, in one-letter code: Large ribosomal subunit protein uL15 (147 aa).

A disordered region spans residues 1–57 (MRLEDLRPTPGSMKKRKRVGRGPGSGHGKTSGRGHKGQKARGTGKVHPWFEGGQTPL). The span at 30 to 44 (TSGRGHKGQKARGTG) shows a compositional bias: basic residues.

The protein belongs to the universal ribosomal protein uL15 family. In terms of assembly, part of the 50S ribosomal subunit.

Binds to the 23S rRNA. This is Large ribosomal subunit protein uL15 from Thermotoga neapolitana (strain ATCC 49049 / DSM 4359 / NBRC 107923 / NS-E).